The following is a 183-amino-acid chain: BLOC-1-related complex subunit 8 homolog (183 aa).

The interval 152–183 (MIGPGTATGRTEAQAATSSNPGELQRSYTTLH) is disordered. Polar residues predominate over residues 159–183 (TGRTEAQAATSSNPGELQRSYTTLH).

The protein belongs to the BORCS8 family.

It is found in the lysosome membrane. Functionally, may participate in the coupling of lysosomes to microtubule plus-end-directed kinesin motor. The protein is BLOC-1-related complex subunit 8 homolog of Drosophila melanogaster (Fruit fly).